A 474-amino-acid chain; its full sequence is PRAME family member 14 (474 aa).

LRR repeat units follow at residues 15 to 38, 204 to 229, 271 to 294, 319 to 342, and 391 to 414; these read QSLL…LYLP, LNSI…CYLK, LLKI…LQNP, LGYL…PLGA, and MGAL…TYPA.

Belongs to the PRAME family.

This is PRAME family member 14 from Homo sapiens (Human).